The primary structure comprises 952 residues: Isoleucine--tRNA ligase (952 aa).

The short motif at 60 to 70 (PYANGSLHIGH) is the 'HIGH' region element. Residue glutamate 562 coordinates L-isoleucyl-5'-AMP. Positions 603–607 (KMSKS) match the 'KMSKS' region motif. Residue lysine 606 coordinates ATP. The Zn(2+) site is built by cysteine 921, cysteine 924, cysteine 941, and cysteine 944.

The protein belongs to the class-I aminoacyl-tRNA synthetase family. IleS type 1 subfamily. As to quaternary structure, monomer. Requires Zn(2+) as cofactor.

Its subcellular location is the cytoplasm. It catalyses the reaction tRNA(Ile) + L-isoleucine + ATP = L-isoleucyl-tRNA(Ile) + AMP + diphosphate. Catalyzes the attachment of isoleucine to tRNA(Ile). As IleRS can inadvertently accommodate and process structurally similar amino acids such as valine, to avoid such errors it has two additional distinct tRNA(Ile)-dependent editing activities. One activity is designated as 'pretransfer' editing and involves the hydrolysis of activated Val-AMP. The other activity is designated 'posttransfer' editing and involves deacylation of mischarged Val-tRNA(Ile). The protein is Isoleucine--tRNA ligase of Microcystis aeruginosa (strain NIES-843 / IAM M-2473).